The sequence spans 603 residues: Deuterosome assembly protein 1 (603 aa).

5 coiled-coil regions span residues 14–59 (CEAE…NAQT), 85–197 (MTQN…GKKQ), 227–278 (IEKL…ELQS), 336–399 (QDQP…KQLK), and 454–480 (HTSINKLEYENERLRNDLAKLRVNGKS). Residue Ser546 is modified to Phosphoserine. Residues 557-600 (AAQHFLLEEEKRAKELEKLLNTHIDELQRHTEFTLNKYSKLKQN) are a coiled coil.

The protein belongs to the CEP63 family. In terms of assembly, interacts with CEP152; the interaction is mutually exclusive with CEP63.

It localises to the cytoplasm. Key structural component of the deuterosome, a structure that promotes de novo centriole amplification in multiciliated cells. Deuterosome-mediated centriole amplification occurs in terminally differentiated multiciliated cells and can generate more than 100 centrioles. Probably sufficient for the specification and formation of the deuterosome inner core. Interacts with CEP152 and recruits PLK4 to activate centriole biogenesis. The sequence is that of Deuterosome assembly protein 1 from Macaca fascicularis (Crab-eating macaque).